Reading from the N-terminus, the 168-residue chain is Photosystem I assembly protein Ycf3 (168 aa).

TPR repeat units follow at residues 35–68 (AFTYYRDGMSAQSEGNYAEALQNYYEATRLEIDP), 72–105 (SYILYNIGLIHTSNGEHTKALEYYFRALERNPFL), and 120–153 (GEQAIRQGDSEIAEAWSDQAAEYWKQAIALTPGN).

It belongs to the Ycf3 family.

It is found in the plastid. The protein localises to the chloroplast thylakoid membrane. Its function is as follows. Essential for the assembly of the photosystem I (PSI) complex. May act as a chaperone-like factor to guide the assembly of the PSI subunits. This Ranunculus macranthus (Large buttercup) protein is Photosystem I assembly protein Ycf3.